Consider the following 63-residue polypeptide: MKASELQGKDQAALTKELNDLLKAQFGLRMQIATQQLNNTSQLKKVRRDIARVKTVMNQKDAK.

Belongs to the universal ribosomal protein uL29 family.

This is Large ribosomal subunit protein uL29 from Herminiimonas arsenicoxydans.